The following is a 324-amino-acid chain: Olfactory receptor 5T17 (324 aa).

Residues 1–37 (MPRTPSYTNTKTTQVNNVTEITVFILLGFTDDVDMNI) lie on the Extracellular side of the membrane. N-linked (GlcNAc...) asparagine glycosylation is present at N17. Residues 38–58 (FLFILFLAIYVVTLIGNLGLV) traverse the membrane as a helical segment. Residues 59–66 (VLVIEDSR) are Cytoplasmic-facing. A helical membrane pass occupies residues 67–87 (LHNPMYYFLTVLSSLDACFSS). Residues 88-111 (VLTPKMLVNFLSKNKSISFAGCAT) lie on the Extracellular side of the membrane. The N-linked (GlcNAc...) asparagine glycan is linked to N101. A disulfide bond links C109 and C201. A helical membrane pass occupies residues 112–132 (QMLLFVTFGTTECFLLAAMAY). Topologically, residues 133-145 (DRYLAIYSPLLYA) are cytoplasmic. Residues 146–166 (VRMSPRVYVPLIIASYTGGIL) form a helical membrane-spanning segment. Topologically, residues 167–208 (HATIHTVATFSLSFCGSNEIRHVFCDIPPLLALSCSDTHLNQ) are extracellular. Residues 209 to 229 (LLLFYCAGSIELITILIVLVS) traverse the membrane as a helical segment. At 230 to 249 (YGFVLLAILKINSAEGRRKI) the chain is on the cytoplasmic side. Residues 250–270 (FSTCGAHLTGVSIFHGTILFM) traverse the membrane as a helical segment. The Extracellular segment spans residues 271 to 283 (YVRPSSNYTLEQD). N277 is a glycosylation site (N-linked (GlcNAc...) asparagine). A helical membrane pass occupies residues 284 to 304 (MVVSTFYTIVIPMLNPIIYSL). Over 305–324 (RNKDVKEAMRKLLKRKLVHE) the chain is Cytoplasmic.

This sequence belongs to the G-protein coupled receptor 1 family.

It is found in the cell membrane. In terms of biological role, potential odorant receptor. This Mus musculus (Mouse) protein is Olfactory receptor 5T17.